Here is a 731-residue protein sequence, read N- to C-terminus: Catalase-peroxidase 2 (731 aa).

Residues 1–10 (MAETPNSDMS) are compositionally biased toward polar residues. The interval 1–26 (MAETPNSDMSGATGGRSKRPKSNQDW) is disordered. The tryptophyl-tyrosyl-methioninium (Trp-Tyr) (with M-244) cross-link spans 95–218 (WHSAGTYRTA…LGASVMGLIY (124 aa)). H96 acts as the Proton acceptor in catalysis. Positions 218-244 (YVNPEGPDGNPDPEASAKNIRQTFDRM) form a cross-link, tryptophyl-tyrosyl-methioninium (Tyr-Met) (with W-95). Position 259 (H259) interacts with heme b.

As to quaternary structure, homodimer. Requires heme b as cofactor. In terms of processing, formation of the three residue Trp-Tyr-Met cross-link is important for the catalase, but not the peroxidase activity of the enzyme.

It catalyses the reaction H2O2 + AH2 = A + 2 H2O. The catalysed reaction is 2 H2O2 = O2 + 2 H2O. In terms of biological role, bifunctional enzyme with both catalase and broad-spectrum peroxidase activity. This chain is Catalase-peroxidase 2, found in Haloarcula marismortui (strain ATCC 43049 / DSM 3752 / JCM 8966 / VKM B-1809) (Halobacterium marismortui).